Here is a 99-residue protein sequence, read N- to C-terminus: Large ribosomal subunit protein bL21 (99 aa).

It belongs to the bacterial ribosomal protein bL21 family. In terms of assembly, part of the 50S ribosomal subunit. Contacts protein L20.

Its function is as follows. This protein binds to 23S rRNA in the presence of protein L20. The protein is Large ribosomal subunit protein bL21 of Deinococcus geothermalis (strain DSM 11300 / CIP 105573 / AG-3a).